The following is a 185-amino-acid chain: NADH-ubiquinone oxidoreductase chain 6 (185 aa).

A run of 5 helical transmembrane segments spans residues 4-24, 33-53, 54-74, 94-114, and 159-179; these read LTYY…IFII, ILYM…IGLG, IFSL…FLFI, LPLV…IYSN, and AFIL…PISI.

The protein belongs to the complex I subunit 6 family. As to quaternary structure, complex I is composed of 37 different subunits.

It localises to the mitochondrion membrane. It carries out the reaction a ubiquinone + NADH + 5 H(+)(in) = a ubiquinol + NAD(+) + 4 H(+)(out). Functionally, core subunit of the mitochondrial membrane respiratory chain NADH dehydrogenase (Complex I) that is believed to belong to the minimal assembly required for catalysis. Complex I functions in the transfer of electrons from NADH to the respiratory chain. The immediate electron acceptor for the enzyme is believed to be ubiquinone. In Yarrowia lipolytica (strain CLIB 122 / E 150) (Yeast), this protein is NADH-ubiquinone oxidoreductase chain 6 (ND6).